Consider the following 372-residue polypeptide: Anhydro-N-acetylmuramic acid kinase (372 aa).

12 to 19 (GTSMDALD) serves as a coordination point for ATP.

Belongs to the anhydro-N-acetylmuramic acid kinase family.

The enzyme catalyses 1,6-anhydro-N-acetyl-beta-muramate + ATP + H2O = N-acetyl-D-muramate 6-phosphate + ADP + H(+). It participates in amino-sugar metabolism; 1,6-anhydro-N-acetylmuramate degradation. The protein operates within cell wall biogenesis; peptidoglycan recycling. Catalyzes the specific phosphorylation of 1,6-anhydro-N-acetylmuramic acid (anhMurNAc) with the simultaneous cleavage of the 1,6-anhydro ring, generating MurNAc-6-P. Is required for the utilization of anhMurNAc either imported from the medium or derived from its own cell wall murein, and thus plays a role in cell wall recycling. The chain is Anhydro-N-acetylmuramic acid kinase from Coxiella burnetii (strain CbuK_Q154) (Coxiella burnetii (strain Q154)).